The chain runs to 102 residues: Small ribosomal subunit protein uS10 (102 aa).

Belongs to the universal ribosomal protein uS10 family. In terms of assembly, part of the 30S ribosomal subunit.

In terms of biological role, involved in the binding of tRNA to the ribosomes. The sequence is that of Small ribosomal subunit protein uS10 from Acidithiobacillus ferrooxidans (strain ATCC 53993 / BNL-5-31) (Leptospirillum ferrooxidans (ATCC 53993)).